The following is a 216-amino-acid chain: MAADSQTSRLLTFTLLCLLWPQEAGAFPAMPLSSLFANAVLRAQHLHQLAADTYKEFERAYIPEGQRYSIQNAQTAFCFSETIPAPTGKEEAQQRSDMELLRFSLLLIQSWLGPVQFLSRIFTNSLMFGTSDRVYEKLKDLEEGIQALMQELEDGSPRVGQILKQTYDKFDTNMRSDDALLKNYGLLSCFKKDLHKAETYLRVMKCRRFVESSCAF.

The N-terminal stretch at 1–26 is a signal peptide; the sequence is MAADSQTSRLLTFTLLCLLWPQEAGA. Histidine 45 lines the Zn(2+) pocket. A disulfide bond links cysteine 78 and cysteine 189. A Phosphoserine modification is found at serine 131. Position 198 (glutamate 198) interacts with Zn(2+). Cysteine 206 and cysteine 214 are disulfide-bonded.

It belongs to the somatotropin/prolactin family.

It is found in the secreted. In terms of biological role, plays an important role in growth control. Its major role in stimulating body growth is to stimulate the liver and other tissues to secrete IGF1. It stimulates both the differentiation and proliferation of myoblasts. It also stimulates amino acid uptake and protein synthesis in muscle and other tissues. This is Somatotropin (GH1) from Mesocricetus auratus (Golden hamster).